The sequence spans 201 residues: FMN-dependent NADH:quinone oxidoreductase (201 aa).

FMN-binding positions include S10, S16–S18, M96–F99, and S140–G143.

Belongs to the azoreductase type 1 family. As to quaternary structure, homodimer. FMN is required as a cofactor.

The enzyme catalyses 2 a quinone + NADH + H(+) = 2 a 1,4-benzosemiquinone + NAD(+). It catalyses the reaction N,N-dimethyl-1,4-phenylenediamine + anthranilate + 2 NAD(+) = 2-(4-dimethylaminophenyl)diazenylbenzoate + 2 NADH + 2 H(+). Functionally, quinone reductase that provides resistance to thiol-specific stress caused by electrophilic quinones. Also exhibits azoreductase activity. Catalyzes the reductive cleavage of the azo bond in aromatic azo compounds to the corresponding amines. In Salmonella paratyphi A (strain ATCC 9150 / SARB42), this protein is FMN-dependent NADH:quinone oxidoreductase.